Here is a 162-residue protein sequence, read N- to C-terminus: ATP synthase subunit b (162 aa).

The chain crosses the membrane as a helical span at residues 16–36 (GISGGTIIYQLLMFIILLALL).

This sequence belongs to the ATPase B chain family. In terms of assembly, F-type ATPases have 2 components, F(1) - the catalytic core - and F(0) - the membrane proton channel. F(1) has five subunits: alpha(3), beta(3), gamma(1), delta(1), epsilon(1). F(0) has three main subunits: a(1), b(2) and c(10-14). The alpha and beta chains form an alternating ring which encloses part of the gamma chain. F(1) is attached to F(0) by a central stalk formed by the gamma and epsilon chains, while a peripheral stalk is formed by the delta and b chains.

It localises to the cell membrane. F(1)F(0) ATP synthase produces ATP from ADP in the presence of a proton or sodium gradient. F-type ATPases consist of two structural domains, F(1) containing the extramembraneous catalytic core and F(0) containing the membrane proton channel, linked together by a central stalk and a peripheral stalk. During catalysis, ATP synthesis in the catalytic domain of F(1) is coupled via a rotary mechanism of the central stalk subunits to proton translocation. Its function is as follows. Component of the F(0) channel, it forms part of the peripheral stalk, linking F(1) to F(0). This Bacillus caldotenax protein is ATP synthase subunit b.